Reading from the N-terminus, the 201-residue chain is Recombination protein RecR (201 aa).

The C4-type zinc finger occupies 60–75; the sequence is CSCCGNVDTIDPCTVC. The 96-residue stretch at 83 to 178 folds into the Toprim domain; sequence SVIIVVEDVS…KITRLAHGVP (96 aa).

It belongs to the RecR family.

May play a role in DNA repair. It seems to be involved in an RecBC-independent recombinational process of DNA repair. It may act with RecF and RecO. This is Recombination protein RecR from Agrobacterium fabrum (strain C58 / ATCC 33970) (Agrobacterium tumefaciens (strain C58)).